A 482-amino-acid polypeptide reads, in one-letter code: Replication factor C large subunit (482 aa).

46–53 provides a ligand contact to ATP; sequence GPPGSGKT. Residues 420–482 are disordered; it reads EKETPKKKKK…KKQATLDSFF (63 aa). The segment covering 442–476 has biased composition (basic and acidic residues); sequence KISEPPKEPLKEVIEETVEKTDKKEKEKKDPKKQA.

Belongs to the activator 1 small subunits family. RfcL subfamily. As to quaternary structure, heteromultimer composed of small subunits (RfcS) and large subunits (RfcL).

Part of the RFC clamp loader complex which loads the PCNA sliding clamp onto DNA. This chain is Replication factor C large subunit, found in Methanococcus maripaludis (strain C7 / ATCC BAA-1331).